The primary structure comprises 149 residues: Calmodulin-1 (149 aa).

At A2 the chain carries N-acetylalanine. 4 consecutive EF-hand domains span residues 8–43, 44–79, 81–116, and 117–149; these read EQIAEFKEAFSLFDKDGDGCITTKELGTVMRSLGQN, PTEAELQDMISEADADQNGTIDFPEFLNLMARKMKD, DSEEELKEAFKVFDKDQNGFISAAELRHVMTNLGEK, and LTDEEVDEMIREADIDGDGQVNYEEFVRMMLAK. Ca(2+) is bound by residues D21, D23, D25, C27, E32, D57, D59, N61, T63, E68, D94, D96, N98, and E105. K116 carries the post-translational modification N6,N6,N6-trimethyllysine. Ca(2+) contacts are provided by D130, D132, D134, Q136, and E141.

This sequence belongs to the calmodulin family. High expression in stolon tips and stems, moderate in roots, and very low in leaves. Localized in the meristematic regions of the shoot and root tips, the tip of the developing tuber and the vascular zones of petiole and tuber. Not detected in mesophyll cells.

In terms of biological role, calmodulin mediates the control of a large number of enzymes, ion channels and other proteins by Ca(2+). Among the enzymes to be stimulated by the calmodulin-Ca(2+) complex are a number of protein kinases and phosphatases. The protein is Calmodulin-1 (PCM1) of Solanum tuberosum (Potato).